The sequence spans 124 residues: Small ribosomal subunit protein uS12 (124 aa).

Position 89 is a 3-methylthioaspartic acid (Asp89).

This sequence belongs to the universal ribosomal protein uS12 family. In terms of assembly, part of the 30S ribosomal subunit. Contacts proteins S8 and S17. May interact with IF1 in the 30S initiation complex.

Functionally, with S4 and S5 plays an important role in translational accuracy. Its function is as follows. Interacts with and stabilizes bases of the 16S rRNA that are involved in tRNA selection in the A site and with the mRNA backbone. Located at the interface of the 30S and 50S subunits, it traverses the body of the 30S subunit contacting proteins on the other side and probably holding the rRNA structure together. The combined cluster of proteins S8, S12 and S17 appears to hold together the shoulder and platform of the 30S subunit. The sequence is that of Small ribosomal subunit protein uS12 from Edwardsiella ictaluri (strain 93-146).